A 287-amino-acid polypeptide reads, in one-letter code: Probable endonuclease 4 (287 aa).

Zn(2+) contacts are provided by His-69, His-109, Glu-144, Asp-178, His-181, His-215, Asp-228, His-230, and Glu-260.

This sequence belongs to the AP endonuclease 2 family. It depends on Zn(2+) as a cofactor.

The enzyme catalyses Endonucleolytic cleavage to 5'-phosphooligonucleotide end-products.. Endonuclease IV plays a role in DNA repair. It cleaves phosphodiester bonds at apurinic or apyrimidinic (AP) sites, generating a 3'-hydroxyl group and a 5'-terminal sugar phosphate. The protein is Probable endonuclease 4 of Thermotoga neapolitana (strain ATCC 49049 / DSM 4359 / NBRC 107923 / NS-E).